A 431-amino-acid polypeptide reads, in one-letter code: MSDELSPEVFDAVCRQADQAARAQERLAQANTEAKNELLLAIADALDEHAADIEAANALDMLESKENGMDAGKLDRLLFDVPRVAAAAQGVRHVATLPDPVGEIVRGYNLPNGLRLTQTRVPMGVIGMIYEARPNVTVDVSSLCLKSGNAALLRGGHAAERTNAATLGVIAPVLEAHGFESTLVQSVDQYGRAGATAMMEARGHIDVLVPRGGAGLIQAVVRNSKVPVIETGAGNVHIYIDKSGDLAKAIPIIINAKTQRVGVCNAAEKLLVHKDVAAEFLPQIAAALAEANVVLQTDTTSYDIISGAAIEGLDLNHATEEDWDTEYLALKMGIKVVPDLDTAIDHINTHSTGHTESIIAEDYAAIEEFTKRIDSAVVVVNASTRFTDGGVFGFGAELGISTQKMHARGPMGLREMTTTKWIGYGTGQVRA.

This sequence belongs to the gamma-glutamyl phosphate reductase family.

It localises to the cytoplasm. It catalyses the reaction L-glutamate 5-semialdehyde + phosphate + NADP(+) = L-glutamyl 5-phosphate + NADPH + H(+). Its pathway is amino-acid biosynthesis; L-proline biosynthesis; L-glutamate 5-semialdehyde from L-glutamate: step 2/2. Its function is as follows. Catalyzes the NADPH-dependent reduction of L-glutamate 5-phosphate into L-glutamate 5-semialdehyde and phosphate. The product spontaneously undergoes cyclization to form 1-pyrroline-5-carboxylate. This Bifidobacterium longum subsp. infantis (strain ATCC 15697 / DSM 20088 / JCM 1222 / NCTC 11817 / S12) protein is Gamma-glutamyl phosphate reductase.